The sequence spans 222 residues: 7-cyano-7-deazaguanine synthase (222 aa).

11–21 (FSGGQDSTTCL) serves as a coordination point for ATP. The Zn(2+) site is built by Cys187, Cys195, Cys198, and Cys201.

This sequence belongs to the QueC family. The cofactor is Zn(2+).

It catalyses the reaction 7-carboxy-7-deazaguanine + NH4(+) + ATP = 7-cyano-7-deazaguanine + ADP + phosphate + H2O + H(+). It functions in the pathway purine metabolism; 7-cyano-7-deazaguanine biosynthesis. In terms of biological role, catalyzes the ATP-dependent conversion of 7-carboxy-7-deazaguanine (CDG) to 7-cyano-7-deazaguanine (preQ(0)). The chain is 7-cyano-7-deazaguanine synthase from Actinobacillus pleuropneumoniae serotype 3 (strain JL03).